A 660-amino-acid polypeptide reads, in one-letter code: MKAVVFAYHNIGCAAVRSLLEAGVEIAAVFTHVDDSNENVFFESVAKLAARNGIPVFAPEDVNHPLWVEKIRQMQPDSIFSFYYRHMLSQEILDIAPKGGFNLHGSLLPNYRGRAPINWVLVNGETETGMTLHTMTVKPDAGAIVAQEALAITDADTAATLHSRMTHLAGELLNKVIPQIVAGTHSLTEQDTTKASYFGRRTPADGEIKWANDSRTIFNLIRAVTEPFPGAFSYLGERRVTIWGATASEKTYDVTPGTIVETKPLTVACAQGSIVLHSGQAENGLYLSGDQLAAEMYLVEGMRFGPQASAVIAATRRQKVLIMGANGFIGNHLTKRLLDDGKYEIYAMDMSSSQIEQHLSHPDFHFVEGDITIHNEWIEYHIKKCDIVLPLVAIATPIEYTRNPLRVFELDFEENLKIVRACVKYDKRIIFPSTSEVYGMCTDEEFDEDTSPLITGPINRQRWIYSTSKQLLDRVIWAYGKKDNLKFTLFRPFNWMGPRLDSLNSARVGSSRAITQLILNLVEGTPIKLIDGGEQKRCFTDISEAIEALFRVIENKDGLCDGQIINIGSPDNEASIKVMAETLVEKFEEHPLRDQFPPFAGYNLVESQSFYGDGYQDVQHRRPSIKNAKKLLNWEPTIMMDQTIEDTLDFFLKTAVEETK.

The formyltransferase ArnAFT stretch occupies residues 1–304 (MKAVVFAYHN…EMYLVEGMRF (304 aa)). His104 acts as the Proton donor; for formyltransferase activity in catalysis. Residues Arg114 and 136-140 (TVKPD) contribute to the (6R)-10-formyltetrahydrofolate site. The tract at residues 316–660 (RRQKVLIMGA…FLKTAVEETK (345 aa)) is dehydrogenase ArnADH. NAD(+) is bound by residues Asp349 and 370 to 371 (DI). UDP-alpha-D-glucuronate is bound by residues Ala395, Tyr400, and 434-435 (TS). Glu436 (proton acceptor; for decarboxylase activity) is an active-site residue. Residues Arg462, Asn494, 528 to 537 (KLIDGGEQKR), and Tyr615 contribute to the UDP-alpha-D-glucuronate site. The active-site Proton donor; for decarboxylase activity is Arg621.

This sequence in the N-terminal section; belongs to the Fmt family. UDP-L-Ara4N formyltransferase subfamily. It in the C-terminal section; belongs to the NAD(P)-dependent epimerase/dehydratase family. UDP-glucuronic acid decarboxylase subfamily. Homohexamer, formed by a dimer of trimers.

It carries out the reaction UDP-alpha-D-glucuronate + NAD(+) = UDP-beta-L-threo-pentopyranos-4-ulose + CO2 + NADH. The catalysed reaction is UDP-4-amino-4-deoxy-beta-L-arabinose + (6R)-10-formyltetrahydrofolate = UDP-4-deoxy-4-formamido-beta-L-arabinose + (6S)-5,6,7,8-tetrahydrofolate + H(+). It functions in the pathway nucleotide-sugar biosynthesis; UDP-4-deoxy-4-formamido-beta-L-arabinose biosynthesis; UDP-4-deoxy-4-formamido-beta-L-arabinose from UDP-alpha-D-glucuronate: step 1/3. The protein operates within nucleotide-sugar biosynthesis; UDP-4-deoxy-4-formamido-beta-L-arabinose biosynthesis; UDP-4-deoxy-4-formamido-beta-L-arabinose from UDP-alpha-D-glucuronate: step 3/3. Its pathway is bacterial outer membrane biogenesis; lipopolysaccharide biosynthesis. Its function is as follows. Bifunctional enzyme that catalyzes the oxidative decarboxylation of UDP-glucuronic acid (UDP-GlcUA) to UDP-4-keto-arabinose (UDP-Ara4O) and the addition of a formyl group to UDP-4-amino-4-deoxy-L-arabinose (UDP-L-Ara4N) to form UDP-L-4-formamido-arabinose (UDP-L-Ara4FN). The modified arabinose is attached to lipid A and is required for resistance to polymyxin and cationic antimicrobial peptides. This chain is Bifunctional polymyxin resistance protein ArnA, found in Shewanella sediminis (strain HAW-EB3).